The primary structure comprises 85 residues: Putative membrane protein insertion efficiency factor (85 aa).

Belongs to the UPF0161 family.

It is found in the cell membrane. Its function is as follows. Could be involved in insertion of integral membrane proteins into the membrane. The sequence is that of Putative membrane protein insertion efficiency factor from Buchnera aphidicola subsp. Baizongia pistaciae (strain Bp).